The sequence spans 1141 residues: Serine-aspartate repeat-containing protein E (1141 aa).

An N-terminal signal peptide occupies residues 1–52 (MINRDNKKAITKKGMISNRLNKFSIRKYTVGTASILVGTTLIFGLGNQEAKA). The short motif at 23-34 (FSIRKYTVGTAS) is the YSIRK-G/S signaling motif element. The segment at 53 to 601 (AENTSTENAK…GDGTVKPEEK (549 aa)) is ligand binding A region. Residues 54–248 (ENTSTENAKQ…RSTKPVATAP (195 aa)) are disordered. The segment covering 61-75 (AKQDDATTSDNKEVV) has biased composition (basic and acidic residues). The segment covering 77–90 (ETENNSTTENDSTN) has biased composition (low complexity). A compositionally biased stretch (basic and acidic residues) spans 92–108 (IKKETNTDSQPEAKEES). Over residues 109 to 126 (TTSSTQQQQNNVTATTET) the composition is skewed to low complexity. Residues 130 to 145 (NIEKENVKPSTDKTAT) are compositionally biased toward basic and acidic residues. Polar residues predominate over residues 159-207 (NYTNNDVTTKPSTSEIQTKPTTPQESTNIENSQPQPTPSKVDNQVTDAT). Basic and acidic residues predominate over residues 216–241 (SKEELKNNPEKLKELVRNDNNTDRST). CNA-B domains lie at 602–714 (LYKI…YKEP), 715–824 (KYNL…YKTP), and 825–935 (KYSL…EEDT). Residues 929–1117 (GYFEEDTSDS…GSENNGSNNA (189 aa)) form a disordered region. Over residues 930-1080 (YFEEDTSDSD…DSDSDSDSDS (151 aa)) the composition is skewed to acidic residues. An LPXTG sorting signal motif is present at residues 1104-1108 (LPETG). The residue at position 1107 (threonine 1107) is a Pentaglycyl murein peptidoglycan amidated threonine. Positions 1108–1141 (GSENNGSNNATLFGGLFAALGSLLLFGRRKKQNK) are cleaved as a propeptide — removed by sortase.

This sequence belongs to the serine-aspartate repeat-containing protein (SDr) family. As to quaternary structure, interacts with host complement factor H/CFAH (via C-terminus). Interacts with host complement regulator C4BPA.

The protein resides in the secreted. It is found in the cell wall. In terms of biological role, cell surface-associated calcium-binding protein which plays an important role in adhesion and pathogenesis. Contributes to the resistance to killing by innate immune components in blood and thus attenuates bacterial clearance by interacting with host complement factor H/CFAH and modulating its activity. Inhibits also bacterial opsonization and killing by interacting with host complement regulator C4BPA and thus inhibiting classical complement pathway activation. The sequence is that of Serine-aspartate repeat-containing protein E (sdrE) from Staphylococcus aureus (strain Mu50 / ATCC 700699).